The primary structure comprises 91 residues: Early E3B 10.4 kDa protein (91 aa).

The first 22 residues, 1–22 (MIPRNFFFTILICAFNVCATFT), serve as a signal peptide directing secretion. Topologically, residues 23 to 34 (AVATASPDCIGP) are lumenal. The helical transmembrane segment at 35–60 (FASYALFAFVTCICVCSIVCLVINFF) threads the bilayer. Over 61–91 (QLVDWIFVRIAYLRHHPEYRNQNVAALLRLI) the chain is Cytoplasmic.

This sequence belongs to the adenoviridae E3B family.

It localises to the host endoplasmic reticulum membrane. In terms of biological role, down-regulates the EGF receptor. The polypeptide is Early E3B 10.4 kDa protein (Homo sapiens (Human)).